We begin with the raw amino-acid sequence, 345 residues long: Eukaryotic translation initiation factor 3 subunit F (345 aa).

An MPN domain is found at 30–166 (VVIQPQALFS…TRAYISAPVG (137 aa)). The tract at residues 308-345 (GGESGSTESGQRGGQRGGKGGRGGQQRNQERSGEEVRA) is disordered. Positions 318–331 (QRGGQRGGKGGRGG) are enriched in gly residues. Basic and acidic residues predominate over residues 335-345 (NQERSGEEVRA).

Belongs to the eIF-3 subunit F family. Component of the eukaryotic translation initiation factor 3 (eIF-3) complex.

It is found in the cytoplasm. Component of the eukaryotic translation initiation factor 3 (eIF-3) complex, which is involved in protein synthesis of a specialized repertoire of mRNAs and, together with other initiation factors, stimulates binding of mRNA and methionyl-tRNAi to the 40S ribosome. The eIF-3 complex specifically targets and initiates translation of a subset of mRNAs involved in cell proliferation. The sequence is that of Eukaryotic translation initiation factor 3 subunit F from Aspergillus terreus (strain NIH 2624 / FGSC A1156).